The following is a 235-amino-acid chain: uncharacterized protein (235 aa).

The tract at residues 37-235 (QNAKLNDGDN…GGEDYPWPWN (199 aa)) is disordered. The segment covering 72 to 89 (GSDDYSDVEDGGAEEGDS) has biased composition (acidic residues). The span at 112–124 (TSSTSTASTSSGS) shows a compositional bias: low complexity. Positions 152–170 (RRPELDLSPKIENRSDSSS) are enriched in basic and acidic residues. A compositionally biased stretch (polar residues) spans 185–202 (NKDNPSRGQGNENPSASD).

Belongs to the herpesviridae BKRF4 family.

This is an uncharacterized protein from Alcelaphine herpesvirus 1 (strain C500) (AlHV-1).